The chain runs to 1026 residues: Multidrug resistance protein MdtC (1026 aa).

The next 12 helical transmembrane spans lie at 12 to 32, 333 to 353, 360 to 380, 387 to 407, 431 to 451, 463 to 483, 528 to 548, 853 to 873, 875 to 895, 897 to 917, 953 to 973, and 984 to 1004; these read VATL…FRLL, EVEQ…FLFL, AIPA…MYLC, LSLM…IVVL, VGFT…PLLL, FAVT…TLTP, WVLL…ISIP, LLLI…LYES, VHPL…LLAL, WFGA…IGIV, PIMM…LTSG, and ITIV…TPVV.

It belongs to the resistance-nodulation-cell division (RND) (TC 2.A.6) family. MdtC subfamily. In terms of assembly, part of a tripartite efflux system composed of MdtA, MdtB and MdtC. MdtC forms a heteromultimer with MdtB.

It localises to the cell inner membrane. The protein is Multidrug resistance protein MdtC of Pectobacterium carotovorum subsp. carotovorum (strain PC1).